A 182-amino-acid chain; its full sequence is NADH-quinone oxidoreductase subunit B 2 (182 aa).

Positions 57, 58, 123, and 153 each coordinate [4Fe-4S] cluster.

It belongs to the complex I 20 kDa subunit family. In terms of assembly, NDH-1 is composed of 14 different subunits. Subunits NuoB, C, D, E, F, and G constitute the peripheral sector of the complex. [4Fe-4S] cluster serves as cofactor.

The protein localises to the cell membrane. The catalysed reaction is a quinone + NADH + 5 H(+)(in) = a quinol + NAD(+) + 4 H(+)(out). In terms of biological role, NDH-1 shuttles electrons from NADH, via FMN and iron-sulfur (Fe-S) centers, to quinones in the respiratory chain. The immediate electron acceptor for the enzyme in this species is believed to be a menaquinone. Couples the redox reaction to proton translocation (for every two electrons transferred, four hydrogen ions are translocated across the cytoplasmic membrane), and thus conserves the redox energy in a proton gradient. This is NADH-quinone oxidoreductase subunit B 2 from Symbiobacterium thermophilum (strain DSM 24528 / JCM 14929 / IAM 14863 / T).